A 90-amino-acid chain; its full sequence is DNA-binding protein HU (90 aa).

The residue at position 4 (T4) is a Phosphothreonine. Positions 56–90 are disordered; the sequence is AARKGRNPQTGEEMEIPASKVPAFKPGKALKDAVK.

This sequence belongs to the bacterial histone-like protein family. As to quaternary structure, homodimer.

In terms of biological role, histone-like DNA-binding protein which is capable of wrapping DNA to stabilize it, and thus to prevent its denaturation under extreme environmental conditions. The chain is DNA-binding protein HU (hup) from Geobacillus stearothermophilus (Bacillus stearothermophilus).